We begin with the raw amino-acid sequence, 57 residues long: Large ribosomal subunit protein bL32A (57 aa).

A disordered region spans residues 1–22 (MAVPARRTSKTKKRLRRTHEKL). The segment covering 7–20 (RTSKTKKRLRRTHE) has biased composition (basic residues).

The protein belongs to the bacterial ribosomal protein bL32 family.

The protein is Large ribosomal subunit protein bL32A (rpmF1) of Enterococcus faecalis (strain ATCC 700802 / V583).